A 347-amino-acid polypeptide reads, in one-letter code: Protein RecA (347 aa).

64 to 71 (GPESSGKT) contributes to the ATP binding site. The interval 328–347 (DKVDEDKTEEEASQESLDLK) is disordered.

Belongs to the RecA family.

It localises to the cytoplasm. Can catalyze the hydrolysis of ATP in the presence of single-stranded DNA, the ATP-dependent uptake of single-stranded DNA by duplex DNA, and the ATP-dependent hybridization of homologous single-stranded DNAs. It interacts with LexA causing its activation and leading to its autocatalytic cleavage. In Oceanobacillus iheyensis (strain DSM 14371 / CIP 107618 / JCM 11309 / KCTC 3954 / HTE831), this protein is Protein RecA.